We begin with the raw amino-acid sequence, 1452 residues long: ABC multidrug transporter A-1 (1452 aa).

The segment at 1–20 (MNESHEAGKNSSTNVEEREE) is disordered. N-linked (GlcNAc...) asparagine glycans are attached at residues asparagine 2, asparagine 10, asparagine 228, asparagine 287, and asparagine 311. Residues 110-363 (LKTLSLARIA…FLQMGFVCPD (254 aa)) enclose the ABC transporter 1 domain. 6 consecutive transmembrane segments (helical) span residues 474 to 494 (VTISSLFGNTIISLVIASIFY), 508 to 528 (ALLFFAVLMNALGCGLEMLTL), 554 to 574 (MIMDLPYKILNAITSNIVLYF), 583 to 603 (GAFFFFVFTSFILTLTMSMFF), 616 to 636 (VLPFSAVLLLGLSMYTGFAIP), and 725 to 745 (IGVIFAYMFLLGAVYLVATDF). One can recognise an ABC transporter 2 domain in the interval 802–1044 (FQWKDVCFDI…ILIDYFVRNG (243 aa)). Residue 838–845 (GVSGAGKT) coordinates ATP. 6 helical membrane-spanning segments follow: residues 1153–1173 (ALCVLSALFVGFSLFHTPNTI), 1183–1203 (IFMLLTLFGQLIQQIMPHFVA), 1223–1243 (FLIANIVVELPWNSLMSVLMF), 1271–1291 (LMIWTFLLFSSTFAHFMIAAF), 1297–1317 (AGNLGNLLFLLCLLFCGVLAT), and 1324–1344 (FWIFMYRVSPFTYLVSGMLSV). N-linked (GlcNAc...) asparagine glycosylation is found at asparagine 1350, asparagine 1365, and asparagine 1391. Residues 1418–1438 (FGLMWVFIVFNIFAACSLYWW) form a helical membrane-spanning segment.

The protein belongs to the ABC transporter superfamily. ABCG family. PDR (TC 3.A.1.205) subfamily.

The protein localises to the membrane. In terms of biological role, ABC transporter that seems not to be involved in the efflux of toxic substances, at least not the classical compounds such as itraconazole, amphotericin B, voriconazole, posaconazole, ravuconazole, or echinocandins. This chain is ABC multidrug transporter A-1, found in Aspergillus fumigatus (strain ATCC MYA-4609 / CBS 101355 / FGSC A1100 / Af293) (Neosartorya fumigata).